Consider the following 83-residue polypeptide: Small ribosomal subunit protein eS21 (83 aa).

M1 bears the N-acetylmethionine mark. K81 carries the post-translational modification N6-acetyllysine.

Belongs to the eukaryotic ribosomal protein eS21 family. As to quaternary structure, component of the 40S small ribosomal subunit.

The protein localises to the cytoplasm. It localises to the cytosol. The protein resides in the rough endoplasmic reticulum. Its function is as follows. Component of the small ribosomal subunit. The ribosome is a large ribonucleoprotein complex responsible for the synthesis of proteins in the cell. The polypeptide is Small ribosomal subunit protein eS21 (Rps21) (Mus musculus (Mouse)).